Consider the following 130-residue polypeptide: ATP synthase epsilon chain (130 aa).

This sequence belongs to the ATPase epsilon chain family. As to quaternary structure, F-type ATPases have 2 components, CF(1) - the catalytic core - and CF(0) - the membrane proton channel. CF(1) has five subunits: alpha(3), beta(3), gamma(1), delta(1), epsilon(1). CF(0) has three main subunits: a, b and c.

It localises to the cell inner membrane. In terms of biological role, produces ATP from ADP in the presence of a proton gradient across the membrane. The protein is ATP synthase epsilon chain (atpC) of Fuscovulum blasticum (Rhodobacter blasticus).